The sequence spans 135 residues: Small ribosomal subunit protein uS12 (135 aa).

At aspartate 89 the chain carries 3-methylthioaspartic acid. Residues 106–135 are disordered; sequence GVANRRQSRSKYGAKRPKAGAAQATKGGKK. Residues 111–123 are compositionally biased toward basic residues; sequence RQSRSKYGAKRPK. Low complexity predominate over residues 124–135; sequence AGAAQATKGGKK.

It belongs to the universal ribosomal protein uS12 family. Part of the 30S ribosomal subunit. Contacts proteins S8 and S17. May interact with IF1 in the 30S initiation complex.

In terms of biological role, with S4 and S5 plays an important role in translational accuracy. Its function is as follows. Interacts with and stabilizes bases of the 16S rRNA that are involved in tRNA selection in the A site and with the mRNA backbone. Located at the interface of the 30S and 50S subunits, it traverses the body of the 30S subunit contacting proteins on the other side and probably holding the rRNA structure together. The combined cluster of proteins S8, S12 and S17 appears to hold together the shoulder and platform of the 30S subunit. This is Small ribosomal subunit protein uS12 from Hydrogenobaculum sp. (strain Y04AAS1).